A 685-amino-acid chain; its full sequence is E3 ubiquitin-protein ligase RNF103 (685 aa).

The next 4 membrane-spanning stretches (helical) occupy residues 6–26 (FFLL…EAIV), 326–346 (LFVL…FITQ), 366–386 (LLII…LDSF), and 411–431 (MFYS…GLLI). The segment covering 526–543 (EEMSEGSQDTENDSESEN) has biased composition (acidic residues). Residues 526-550 (EEMSEGSQDTENDSESENTDTLSSE) form a disordered region. The segment at 621-663 (CVVCLENFENGCLLMGLPCGHVFHQNCIVMWLAGGRHCCPVCR) adopts an RING-type zinc-finger fold.

Interacts with DERL1 and VCP. In terms of tissue distribution, highly expressed in the normal cerebellum but not in the cerebral cortex.

Its subcellular location is the endoplasmic reticulum membrane. The enzyme catalyses S-ubiquitinyl-[E2 ubiquitin-conjugating enzyme]-L-cysteine + [acceptor protein]-L-lysine = [E2 ubiquitin-conjugating enzyme]-L-cysteine + N(6)-ubiquitinyl-[acceptor protein]-L-lysine.. Its pathway is protein modification; protein ubiquitination. In terms of biological role, acts as an E2-dependent E3 ubiquitin-protein ligase, probably involved in the ER-associated protein degradation pathway. This Homo sapiens (Human) protein is E3 ubiquitin-protein ligase RNF103 (RNF103).